The chain runs to 365 residues: Histidinol-phosphate aminotransferase 2 (365 aa).

The residue at position 226 (Lys226) is an N6-(pyridoxal phosphate)lysine.

Belongs to the class-II pyridoxal-phosphate-dependent aminotransferase family. Histidinol-phosphate aminotransferase subfamily. As to quaternary structure, homodimer. Pyridoxal 5'-phosphate serves as cofactor.

The catalysed reaction is L-histidinol phosphate + 2-oxoglutarate = 3-(imidazol-4-yl)-2-oxopropyl phosphate + L-glutamate. The protein operates within amino-acid biosynthesis; L-histidine biosynthesis; L-histidine from 5-phospho-alpha-D-ribose 1-diphosphate: step 7/9. The sequence is that of Histidinol-phosphate aminotransferase 2 (hisC2) from Pasteurella multocida (strain Pm70).